A 241-amino-acid chain; its full sequence is Uridylate kinase (241 aa).

ATP is bound by residues 15-18, glycine 58, and arginine 62; that span reads KLSG. UMP contacts are provided by residues aspartate 77 and 138-145; that span reads TGNPYFTT. ATP is bound by residues threonine 165, tyrosine 171, and aspartate 174.

This sequence belongs to the UMP kinase family. In terms of assembly, homohexamer.

It localises to the cytoplasm. It carries out the reaction UMP + ATP = UDP + ADP. The protein operates within pyrimidine metabolism; CTP biosynthesis via de novo pathway; UDP from UMP (UMPK route): step 1/1. With respect to regulation, inhibited by UTP. Its function is as follows. Catalyzes the reversible phosphorylation of UMP to UDP. In Desulfotalea psychrophila (strain LSv54 / DSM 12343), this protein is Uridylate kinase.